Reading from the N-terminus, the 174-residue chain is MTTIVSVRREGKVVVAGDGQASQGDMIAKGNVKKVRRLYNDSVLVGFAGSTADAFILFDLCERKLEMHQGNLTKAAVELAKEWRSDRALRRLEAMLIVADKTTSLIISGTGDLINADNDLLTIGSGGYFARSAATALLENTDLDAREIATKALTIAGDIDVYTNHNHTVEELNA.

Residue Thr2 is part of the active site. Na(+)-binding residues include Gly157, Asp160, and Thr163.

Belongs to the peptidase T1B family. HslV subfamily. In terms of assembly, a double ring-shaped homohexamer of HslV is capped on each side by a ring-shaped HslU homohexamer. The assembly of the HslU/HslV complex is dependent on binding of ATP.

Its subcellular location is the cytoplasm. It carries out the reaction ATP-dependent cleavage of peptide bonds with broad specificity.. Its activity is regulated as follows. Allosterically activated by HslU binding. Functionally, protease subunit of a proteasome-like degradation complex believed to be a general protein degrading machinery. This is ATP-dependent protease subunit HslV from Aliivibrio fischeri (strain MJ11) (Vibrio fischeri).